The sequence spans 815 residues: Lon protease 1 (815 aa).

Residues 19–212 (MPLLPLRDIV…KLFGQIRSEI (194 aa)) form the Lon N-terminal domain. ATP is bound at residue 364-371 (GPPGVGKT). A Lon proteolytic domain is found at 601 to 782 (KDEIGLAVGL…DDVLRKAMVV (182 aa)). Residues Ser-688 and Lys-731 contribute to the active site. Residues 793–815 (EAGAQQAVMFEQKPPAADEIRAH) are disordered.

It belongs to the peptidase S16 family. Homohexamer. Organized in a ring with a central cavity.

The protein localises to the cytoplasm. It catalyses the reaction Hydrolysis of proteins in presence of ATP.. ATP-dependent serine protease that mediates the selective degradation of mutant and abnormal proteins as well as certain short-lived regulatory proteins. Required for cellular homeostasis and for survival from DNA damage and developmental changes induced by stress. Degrades polypeptides processively to yield small peptide fragments that are 5 to 10 amino acids long. Binds to DNA in a double-stranded, site-specific manner. This Syntrophobacter fumaroxidans (strain DSM 10017 / MPOB) protein is Lon protease 1.